Consider the following 459-residue polypeptide: tRNA modification GTPase MnmE (459 aa).

(6S)-5-formyl-5,6,7,8-tetrahydrofolate-binding residues include R23, E88, and R127. Residues 223-381 (GLNTVIVGKP…FKEVIKELFF (159 aa)) form the TrmE-type G domain. K(+) is bound at residue N233. GTP contacts are provided by residues 233 to 238 (NVGKSS), 252 to 258 (TDVPGTT), and 277 to 280 (DTAG). S237 contacts Mg(2+). Residues T252, V254, and T257 each contribute to the K(+) site. T258 provides a ligand contact to Mg(2+). Residue K459 coordinates (6S)-5-formyl-5,6,7,8-tetrahydrofolate.

It belongs to the TRAFAC class TrmE-Era-EngA-EngB-Septin-like GTPase superfamily. TrmE GTPase family. As to quaternary structure, homodimer. Heterotetramer of two MnmE and two MnmG subunits. It depends on K(+) as a cofactor.

It localises to the cytoplasm. Exhibits a very high intrinsic GTPase hydrolysis rate. Involved in the addition of a carboxymethylaminomethyl (cmnm) group at the wobble position (U34) of certain tRNAs, forming tRNA-cmnm(5)s(2)U34. This Clostridium novyi (strain NT) protein is tRNA modification GTPase MnmE.